Reading from the N-terminus, the 363-residue chain is Alanine racemase (363 aa).

Lys35 functions as the Proton acceptor; specific for D-alanine in the catalytic mechanism. The residue at position 35 (Lys35) is an N6-(pyridoxal phosphate)lysine. A substrate-binding site is contributed by Arg134. The Proton acceptor; specific for L-alanine role is filled by Tyr259. Substrate is bound at residue Met307.

This sequence belongs to the alanine racemase family. The cofactor is pyridoxal 5'-phosphate.

It carries out the reaction L-alanine = D-alanine. Its pathway is amino-acid biosynthesis; D-alanine biosynthesis; D-alanine from L-alanine: step 1/1. Functionally, catalyzes the interconversion of L-alanine and D-alanine. May also act on other amino acids. This Shewanella denitrificans (strain OS217 / ATCC BAA-1090 / DSM 15013) protein is Alanine racemase (alr).